The primary structure comprises 172 residues: Adenine phosphoribosyltransferase (172 aa).

This sequence belongs to the purine/pyrimidine phosphoribosyltransferase family. Homodimer.

Its subcellular location is the cytoplasm. It catalyses the reaction AMP + diphosphate = 5-phospho-alpha-D-ribose 1-diphosphate + adenine. It functions in the pathway purine metabolism; AMP biosynthesis via salvage pathway; AMP from adenine: step 1/1. In terms of biological role, catalyzes a salvage reaction resulting in the formation of AMP, that is energically less costly than de novo synthesis. This is Adenine phosphoribosyltransferase from Clostridium perfringens (strain ATCC 13124 / DSM 756 / JCM 1290 / NCIMB 6125 / NCTC 8237 / Type A).